Here is a 276-residue protein sequence, read N- to C-terminus: Putative pyruvate, phosphate dikinase regulatory protein 2 (276 aa).

146 to 153 lines the ADP pocket; sequence GVSRTSKT.

This sequence belongs to the pyruvate, phosphate/water dikinase regulatory protein family. PDRP subfamily.

It carries out the reaction N(tele)-phospho-L-histidyl/L-threonyl-[pyruvate, phosphate dikinase] + ADP = N(tele)-phospho-L-histidyl/O-phospho-L-threonyl-[pyruvate, phosphate dikinase] + AMP + H(+). It catalyses the reaction N(tele)-phospho-L-histidyl/O-phospho-L-threonyl-[pyruvate, phosphate dikinase] + phosphate + H(+) = N(tele)-phospho-L-histidyl/L-threonyl-[pyruvate, phosphate dikinase] + diphosphate. Functionally, bifunctional serine/threonine kinase and phosphorylase involved in the regulation of the pyruvate, phosphate dikinase (PPDK) by catalyzing its phosphorylation/dephosphorylation. This is Putative pyruvate, phosphate dikinase regulatory protein 2 from Enterococcus faecalis (strain ATCC 700802 / V583).